Reading from the N-terminus, the 591-residue chain is Alpha-(1-&gt;6)-mannopyranosyltransferase Rv1459c (591 aa).

Helical transmembrane passes span 40–60, 80–100, 117–137, 201–221, 235–255, 259–279, 321–341, 367–387, 408–428, 441–461, 473–493, 502–522, and 527–547; these read FGAT…ARPV, VSLT…LMLG, TLLL…KDVY, IVAA…LIVW, VSAL…VAGI, ALML…LDMA, EWGP…SSQV, LLLA…ILGW, WMSP…LLGL, AIGV…VLRG, LAVT…WAII, PGFR…GPTA, and FALF…ILLI. The interval 569–591 is disordered; it reads ESASKTPATRRPTAAPDAYADST. Positions 574-584 are enriched in low complexity; the sequence is TPATRRPTAAP.

It belongs to the MptA/B family.

It localises to the membrane. Its function is as follows. Catalyzes the addition of alpha-(1-&gt;6)-mannose residue. The protein is Alpha-(1-&gt;6)-mannopyranosyltransferase Rv1459c of Mycobacterium tuberculosis (strain ATCC 25618 / H37Rv).